We begin with the raw amino-acid sequence, 444 residues long: Enolase (444 aa).

H163 and E172 together coordinate substrate. The active-site Proton donor is E215. Mg(2+)-binding residues include D250, E300, and D327. Residues E300 and D327 each coordinate substrate. K352 functions as the Proton acceptor in the catalytic mechanism. Residues 379–382 (SHRS) and K403 contribute to the substrate site.

It belongs to the enolase family. As to quaternary structure, homodimer. It depends on Mg(2+) as a cofactor.

It is found in the cytoplasm. It carries out the reaction (2R)-2-phosphoglycerate = phosphoenolpyruvate + H2O. It participates in carbohydrate degradation; glycolysis; pyruvate from D-glyceraldehyde 3-phosphate: step 4/5. The sequence is that of Enolase (PGH1) from Solanum lycopersicum (Tomato).